We begin with the raw amino-acid sequence, 103 residues long: Large ribosomal subunit protein bL21 (103 aa).

The protein belongs to the bacterial ribosomal protein bL21 family. In terms of assembly, part of the 50S ribosomal subunit. Contacts protein L20.

In terms of biological role, this protein binds to 23S rRNA in the presence of protein L20. The protein is Large ribosomal subunit protein bL21 of Vesicomyosocius okutanii subsp. Calyptogena okutanii (strain HA).